Here is a 332-residue protein sequence, read N- to C-terminus: L-lactate dehydrogenase A chain (332 aa).

Alanine 2 is modified (N-acetylalanine). Residue lysine 5 is modified to N6-acetyllysine; alternate. Residue lysine 5 is modified to N6-succinyllysine; alternate. N6-acetyllysine is present on lysine 14. 29–57 contacts NAD(+); it reads GAVGMACAISILMKDLADELALVDVIEDK. At lysine 57 the chain carries N6-acetyllysine; alternate. Residue lysine 57 forms a Glycyl lysine isopeptide (Lys-Gly) (interchain with G-Cter in SUMO2); alternate linkage. Lysine 81 is modified (N6-acetyllysine). Arginine 99 lines the NAD(+) pocket. Residue arginine 106 coordinates substrate. Lysine 118 bears the N6-acetyllysine; alternate mark. The residue at position 118 (lysine 118) is an N6-succinyllysine; alternate. N6-acetyllysine is present on lysine 126. Residue asparagine 138 participates in NAD(+) binding. Substrate contacts are provided by asparagine 138 and arginine 169. Histidine 193 functions as the Proton acceptor in the catalytic mechanism. Serine 213 bears the Phosphoserine mark. N6-acetyllysine occurs at positions 224 and 232. Tyrosine 239 is modified (phosphotyrosine). At lysine 243 the chain carries N6-acetyllysine. Threonine 248 is a binding site for substrate. At threonine 309 the chain carries Phosphothreonine. N6-acetyllysine; alternate is present on lysine 318. Lysine 318 is subject to N6-succinyllysine; alternate. Phosphothreonine is present on threonine 322.

It belongs to the LDH/MDH superfamily. LDH family. Homotetramer. Interacts with PTEN upstream reading frame protein MP31. ISGylated.

The protein localises to the cytoplasm. The enzyme catalyses (S)-lactate + NAD(+) = pyruvate + NADH + H(+). It functions in the pathway fermentation; pyruvate fermentation to lactate; (S)-lactate from pyruvate: step 1/1. Functionally, interconverts simultaneously and stereospecifically pyruvate and lactate with concomitant interconversion of NADH and NAD(+). This Rattus norvegicus (Rat) protein is L-lactate dehydrogenase A chain (Ldha).